Consider the following 129-residue polypeptide: Large ribosomal subunit protein bL17 (129 aa).

This sequence belongs to the bacterial ribosomal protein bL17 family. In terms of assembly, part of the 50S ribosomal subunit. Contacts protein L32.

In Desulfotalea psychrophila (strain LSv54 / DSM 12343), this protein is Large ribosomal subunit protein bL17.